A 240-amino-acid polypeptide reads, in one-letter code: uncharacterized protein (240 aa).

The next 3 helical transmembrane spans lie at 12-32, 66-86, and 89-109; these read ICIH…ILMS, IQVL…FVLV, and ISGY…IYFF. N-linked (GlcNAc...) asparagine; by host glycans are attached at residues Asn129 and Asn157.

The protein localises to the membrane. This is an uncharacterized protein from Acanthamoeba polyphaga mimivirus (APMV).